The following is a 708-amino-acid chain: Matrix metalloproteinase-9 (708 aa).

The signal sequence occupies residues 1-19; sequence MSPWQPLLLVLLALGYSFA. Residues 20 to 107 constitute a propeptide, activation peptide; sequence APHQRQPTYV…PRCGVPDVGK (88 aa). Residue Asn39 is glycosylated (N-linked (GlcNAc...) asparagine). Positions 98–105 match the Cysteine switch motif; the sequence is PRCGVPDV. Cys100 is a binding site for Zn(2+). Asn121 is a glycosylation site (N-linked (GlcNAc...) asparagine). Ca(2+) is bound by residues Asp132 and Asp166. Zn(2+) contacts are provided by His176 and Asp178. The Ca(2+) site is built by Asp183, Gly184, Asp186, and Leu188. His191 contributes to the Zn(2+) binding site. Gly198, Gln200, and Asp202 together coordinate Ca(2+). His204 is a Zn(2+) binding site. Ca(2+) contacts are provided by Asp206, Asp207, and Glu209. 3 consecutive Fibronectin type-II domains span residues 226-274, 284-332, and 343-391; these read ANGA…FCPS, GDGK…FCPT, and SAGE…FCPD. 6 disulfide bridges follow: Cys231–Cys257, Cys245–Cys272, Cys289–Cys315, Cys303–Cys330, Cys348–Cys374, and Cys362–Cys389. Residue His402 participates in Zn(2+) binding. The active site involves Glu403. Zn(2+) is bound by residues His406 and His412. Residues 441–520 are disordered; it reads HHLYGRGSKP…SSTPDDNPCN (80 aa). Over residues 480-490 the composition is skewed to low complexity; the sequence is PTGGPTVAPTG. A compositionally biased stretch (pro residues) spans 491 to 502; it reads APSPGPTGPPTA. A disulfide bridge connects residues Cys519 and Cys707. Hemopexin repeat units lie at residues 521 to 566, 567 to 611, 613 to 660, and 661 to 707; these read VDVF…WPAF, PSKL…GLGS, VTLV…FSGV, and PWNS…LLQC.

This sequence belongs to the peptidase M10A family. Exists as monomer or homodimer; disulfide-linked. Also exists as heterodimer with LCN2. Macrophages and transformed cell lines produce only the monomeric form. Interacts with ECM1. Zn(2+) is required as a cofactor. Requires Ca(2+) as cofactor. N- and O-glycosylated.

The protein resides in the secreted. The protein localises to the extracellular space. It localises to the extracellular matrix. It catalyses the reaction Cleavage of gelatin types I and V and collagen types IV and V.. In terms of biological role, matrix metalloproteinase that plays an essential role in local proteolysis of the extracellular matrix and in leukocyte migration. Could play a role in bone osteoclastic resorption. Cleaves KiSS1 at a Gly-|-Leu bond. Cleaves NINJ1 to generate the Secreted ninjurin-1 form. Cleaves type IV and type V collagen into large C-terminal three quarter fragments and shorter N-terminal one quarter fragments. Degrades fibronectin but not laminin or Pz-peptide. This chain is Matrix metalloproteinase-9 (Mmp9), found in Rattus norvegicus (Rat).